The sequence spans 458 residues: Argininosuccinate lyase (458 aa).

It belongs to the lyase 1 family. Argininosuccinate lyase subfamily.

The protein resides in the cytoplasm. The enzyme catalyses 2-(N(omega)-L-arginino)succinate = fumarate + L-arginine. It functions in the pathway amino-acid biosynthesis; L-arginine biosynthesis; L-arginine from L-ornithine and carbamoyl phosphate: step 3/3. This Geobacter metallireducens (strain ATCC 53774 / DSM 7210 / GS-15) protein is Argininosuccinate lyase.